We begin with the raw amino-acid sequence, 229 residues long: MSLLAQLDQKIAANGGLIVSCQPIPDSPLDKPEIVAAMALAAEQAGAVAIRIEGVANLQATRAVVSVPIIGIVKRDLEDSPVRITAYIEDVDALAQAGADIIAIDGTDRPRPVPVETLLARIHHHGLLAMTDCSTPEDGLACQKLGAEIIGTTLSGYTTPETPEEPDLALVKTLSEAGCRVIAEGRYNTPAQAADAMRHGAWAVTVGSAITRLEHICQWYNTAMKKAVL.

It belongs to the NanE family.

The catalysed reaction is an N-acyl-D-glucosamine 6-phosphate = an N-acyl-D-mannosamine 6-phosphate. It participates in amino-sugar metabolism; N-acetylneuraminate degradation; D-fructose 6-phosphate from N-acetylneuraminate: step 3/5. In terms of biological role, converts N-acetylmannosamine-6-phosphate (ManNAc-6-P) to N-acetylglucosamine-6-phosphate (GlcNAc-6-P). The polypeptide is Putative N-acetylmannosamine-6-phosphate 2-epimerase (Shigella sonnei (strain Ss046)).